The following is a 141-amino-acid chain: Large ribosomal subunit protein uL11 (141 aa).

This sequence belongs to the universal ribosomal protein uL11 family. In terms of assembly, part of the ribosomal stalk of the 50S ribosomal subunit. Interacts with L10 and the large rRNA to form the base of the stalk. L10 forms an elongated spine to which L12 dimers bind in a sequential fashion forming a multimeric L10(L12)X complex. One or more lysine residues are methylated.

Forms part of the ribosomal stalk which helps the ribosome interact with GTP-bound translation factors. The polypeptide is Large ribosomal subunit protein uL11 (Trichodesmium erythraeum (strain IMS101)).